Reading from the N-terminus, the 226-residue chain is MSRAQALPDPAAVGYPSFKLILVGDGGTGKTTFVKRHITGEFEKRYEPTIGVEVRPLDFHTSRGKVRFCCWDTAGQEKFGGLRDGYYIHGHCAIIMFDVTSRLTYKNVPTWHKDICRVCDNIPIVLCGNKVDMKNRQVKAKMVTFHRKKNLQYYEISAKSNYNFEKPFLYLARKLTGDMNLRFVEELALLPADVTIDLIAQQKIETEIAAAAAMPLPDEDEDGLMD.

A Small GTPase Ran-type domain is found at Gly-14–Asp-178. Asp-25–Thr-32 contacts GTP. The segment at Lys-44 to Val-52 is switch-I. Residues Gly-75, Asn-129–Asp-132, and Ser-157–Lys-159 each bind GTP. A switch-II region spans residues Gly-75–His-91.

This sequence belongs to the small GTPase superfamily. Ran family. As to quaternary structure, found in a nuclear export complex with RanGTP, exportin and pre-miRNA.

Its subcellular location is the nucleus. Functionally, GTP-binding protein involved in nucleocytoplasmic transport. Required for the import of protein into the nucleus and also for RNA export. Involved in chromatin condensation and control of cell cycle. The polypeptide is GTP-binding nuclear protein Ran-3 (RAN3) (Oryza sativa subsp. indica (Rice)).